A 154-amino-acid chain; its full sequence is MIPCSDRIIRNAPGPFDAEVVLDYESRLLRRKRLACAGGDFMVDLAEVASLEDGDAFALSDGRIVVVRAAAEPVLVVRGPLARLAWHIGNRHTPCRIEADRLIIRQDHVLEAMLRRLGAEISHQNLPFRPEGGAYGHGRTFGHDHGHAHDHHHA.

The segment at 135-154 (YGHGRTFGHDHGHAHDHHHA) is disordered.

It belongs to the UreE family.

It is found in the cytoplasm. Functionally, involved in urease metallocenter assembly. Binds nickel. Probably functions as a nickel donor during metallocenter assembly. This chain is Urease accessory protein UreE, found in Paracoccus denitrificans (strain Pd 1222).